Here is a 163-residue protein sequence, read N- to C-terminus: Nucleotide-binding protein NFA_51200 (163 aa).

The protein belongs to the YajQ family.

Functionally, nucleotide-binding protein. This is Nucleotide-binding protein NFA_51200 from Nocardia farcinica (strain IFM 10152).